A 306-amino-acid chain; its full sequence is ClpXP adapter protein SpxH (306 aa).

Belongs to the SpxH family. In terms of assembly, interacts with Spx.

It localises to the cytoplasm. Its function is as follows. Adapter protein required for efficient degradation of Spx by ClpXP under non-stress conditions. Interaction with Spx stabilizes Spx and exposes the C-terminus of Spx for recognition and proteolysis by ClpXP. The polypeptide is ClpXP adapter protein SpxH (Halalkalibacterium halodurans (strain ATCC BAA-125 / DSM 18197 / FERM 7344 / JCM 9153 / C-125) (Bacillus halodurans)).